A 124-amino-acid chain; its full sequence is Outer dense fiber protein 2 (124 aa).

A coiled-coil region spans residues 13 to 124; the sequence is KEDSERLMEQ…EAIMEQLKEL (112 aa).

The protein belongs to the ODF2 family. In terms of assembly, self-associates. Associates with microtubules and forms a fibrillar structure partially linked to the microtubule network. Interacts through its C-terminus with PLK1. Interacts with ODF1. Interacts with MARK4; the interaction is required for localization of ODF2 to centrioles. Interacts with TSSK4. Interacts with AKNA. Interacts with QRICH2. Interacts with CFAP58. Interacts with BBOF1. Interacts with CCDC38. Interacts with CCDC42. Tyrosine phosphorylated. Detected in sperm flagella (at protein level).

It localises to the cytoplasm. Its subcellular location is the cytoskeleton. It is found in the microtubule organizing center. The protein resides in the centrosome. The protein localises to the cell projection. It localises to the cilium. Its subcellular location is the centriole. It is found in the spindle pole. The protein resides in the flagellum. Its function is as follows. Seems to be a major component of sperm tail outer dense fibers (ODF). ODFs are filamentous structures located on the outside of the axoneme in the midpiece and principal piece of the mammalian sperm tail and may help to maintain the passive elastic structures and elastic recoil of the sperm tail. May have a modulating influence on sperm motility. Functions as a general scaffold protein that is specifically localized at the distal/subdistal appendages of mother centrioles. Component of the centrosome matrix required for the localization of PLK1 and NIN to the centrosomes. Required for the formation and/or maintenance of normal CETN1 assembly. The protein is Outer dense fiber protein 2 of Mesocricetus auratus (Golden hamster).